The sequence spans 274 residues: Large ribosomal subunit protein uL2 (274 aa).

The disordered stretch occupies residues 224 to 274 (VAMNPVDHPHGGGEGRTSGGRHPVTPWGIPTKGYKTRRNKRSNKLIVQKRK). Residues 257-274 (YKTRRNKRSNKLIVQKRK) are compositionally biased toward basic residues.

The protein belongs to the universal ribosomal protein uL2 family. As to quaternary structure, part of the 50S ribosomal subunit. Forms a bridge to the 30S subunit in the 70S ribosome.

Its function is as follows. One of the primary rRNA binding proteins. Required for association of the 30S and 50S subunits to form the 70S ribosome, for tRNA binding and peptide bond formation. It has been suggested to have peptidyltransferase activity; this is somewhat controversial. Makes several contacts with the 16S rRNA in the 70S ribosome. The protein is Large ribosomal subunit protein uL2 of Francisella tularensis subsp. holarctica (strain FTNF002-00 / FTA).